Here is a 286-residue protein sequence, read N- to C-terminus: Enoyl-CoA hydratase ChsH3 (286 aa).

The MaoC-like domain occupies 163–271 (APERAPDLQV…RLVASVVAPT (109 aa)). Catalysis depends on residues Asp-189 and His-194.

The protein belongs to the enoyl-CoA hydratase/isomerase family. Homodimer.

The enzyme catalyses (22E)-3-oxochola-4,22-dien-24-oyl-CoA + H2O = (22S)-hydroxy-3-oxo-chol-4-ene-24-oyl-CoA. It participates in steroid metabolism; cholesterol degradation. Its function is as follows. Degradation of the cholesterol side chain involves 3 multistep beta-oxidation cycles, this is involved in the second cycle. Hydrates bulky steroid enoyl-CoA esters, has highest activity with 3-OCDO-CoA (3-oxochol-4,22-dien-24-oyl-CoA) making (22S)-HOCO-CoA, followed by octenoyl-CoA, with weaker activity on 3-OCDS-CoA (3-oxocholest-4,24-dien-26-oyl-CoA) and none on 3-OPDC-CoA (3-oxo-pregna-4,17-diene-20- carboxyl-CoA). Hydrates the same substrate as EchA19, but the 2 enzymes make different stereoisomers of the product. This Mycobacterium tuberculosis (strain ATCC 25618 / H37Rv) protein is Enoyl-CoA hydratase ChsH3.